A 291-amino-acid chain; its full sequence is N-acetylmannosamine kinase (291 aa).

ATP-binding positions include A5–K12 and G132–S139. H156, C166, C168, and C173 together coordinate Zn(2+).

Belongs to the ROK (NagC/XylR) family. NanK subfamily. Homodimer.

It catalyses the reaction an N-acyl-D-mannosamine + ATP = an N-acyl-D-mannosamine 6-phosphate + ADP + H(+). It functions in the pathway amino-sugar metabolism; N-acetylneuraminate degradation; D-fructose 6-phosphate from N-acetylneuraminate: step 2/5. In terms of biological role, catalyzes the phosphorylation of N-acetylmannosamine (ManNAc) to ManNAc-6-P. This is N-acetylmannosamine kinase from Escherichia coli (strain 55989 / EAEC).